The following is a 619-amino-acid chain: Hypermethylated in cancer 2 protein (619 aa).

A BTB domain is found at 46–109; that stretch reads CDVIIMVENS…IYTGKLLPSD (64 aa). S166, S169, and S197 each carry phosphoserine. 2 disordered regions span residues 180–293 and 307–426; these read DVRK…VGNS and MDVE…GHTG. Residues 214–228 are compositionally biased toward gly residues; the sequence is LGLGGPAGGEMGLGG. The interval 247–249 is binding to CtBP; sequence DLS. A compositionally biased stretch (polar residues) spans 281–293; sequence APTSTSALPVGNS. Over residues 337 to 357 the composition is skewed to basic and acidic residues; it reads KKDWNKKEPVAGSPFDRRETG. A phosphoserine mark is found at S349 and S416. 5 consecutive C2H2-type zinc fingers follow at residues 446-468, 509-531, 537-559, 565-587, and 593-615; these read YVCIPCAKGFPSSEQLNAHVETH, FKCSVCEKTYKDPATLRQHEKTH, FPCNICGKMFTQRGTMTRHMRSH, FACDECGMRFTRQYRLTEHMRVH, and YECQLCGGKFTQQRNLISHLRMH.

The protein belongs to the krueppel C2H2-type zinc-finger protein family. Hic subfamily. As to quaternary structure, self-associates. Interacts with HIC1.

The protein resides in the nucleus. Functionally, transcriptional repressor. In Mus musculus (Mouse), this protein is Hypermethylated in cancer 2 protein (Hic2).